The chain runs to 156 residues: Nucleoredoxin-like protein 2 (156 aa).

A Thioredoxin domain is found at 9-147 (RLVTREGTVV…LACFQNWVEA (139 aa)).

The protein belongs to the nucleoredoxin family. Both isoforms are expressed in retina, in the photoreceptor layer, and throughout the olfactory sensory neuron layer of the nasal epithelium, in neurons. Also expressed at low levels in brain and testis.

May be involved in the maintenance of both the function and the viability of sensory neurons, including photoreceptors and olfactory neurons. In the retina, isoform 1 may be required for rod function and isoform 2 for cone viability and function. The protein is Nucleoredoxin-like protein 2 (Nxnl2) of Mus musculus (Mouse).